The primary structure comprises 347 residues: N-acetyl-gamma-glutamyl-phosphate reductase (347 aa).

The active site involves C151.

The protein belongs to the NAGSA dehydrogenase family. Type 1 subfamily.

The protein resides in the cytoplasm. It catalyses the reaction N-acetyl-L-glutamate 5-semialdehyde + phosphate + NADP(+) = N-acetyl-L-glutamyl 5-phosphate + NADPH + H(+). It functions in the pathway amino-acid biosynthesis; L-arginine biosynthesis; N(2)-acetyl-L-ornithine from L-glutamate: step 3/4. Functionally, catalyzes the NADPH-dependent reduction of N-acetyl-5-glutamyl phosphate to yield N-acetyl-L-glutamate 5-semialdehyde. This is N-acetyl-gamma-glutamyl-phosphate reductase from Corynebacterium glutamicum (strain R).